A 280-amino-acid chain; its full sequence is MTLRDHHFYNVTYTAYRLSPLFGFEYSNLTEIGKKLTRFLRYGTDRTGYFTNSTRFADLIIEKATFTEFGNTSSFPKFLKLDISYETSSDLEVKRKGQMFFFESFRKFSHAEADRTRLSLEGNSVFFSLALVRMDGALWMAVEQFLQQEFDTQILPCLIAPEILLEFLKIWQNHVNSQTALPLELTWTTGNPNLSSVTISIRPEDLKKIFRSSSFFYPILMEHIKRCTSLDLTNSVFSLSKVNTDCAILTSSGKLKIFSKAQNIVFDVLLALEPMQLPEY.

The protein belongs to the CENP-L/IML3 family. In terms of assembly, component of the inner kinetochore constitutive centromere-associated network (CCAN) (also known as central kinetochore Sim4 complex in fission yeast), which is composed of at least cnl2, cnp3, cnp20, fta1, fta2, fta3, fta4, fta6, fta7, mal2, mhf1, mhf2, mis6, mis15, mis17, sim4 and wip1.

The protein localises to the nucleus. It is found in the chromosome. Its subcellular location is the centromere. It localises to the kinetochore. In terms of biological role, component of the kinetochore, a multiprotein complex that assembles on centromeric DNA and attaches chromosomes to spindle microtubules, mediating chromosome segregation and sister chromatid segregation during meiosis and mitosis. Component of the inner kinetochore constitutive centromere-associated network (CCAN), which serves as a structural platform for outer kinetochore assembly. The protein is Inner kinetochore subunit fta1 (fta1) of Schizosaccharomyces pombe (strain 972 / ATCC 24843) (Fission yeast).